Reading from the N-terminus, the 315-residue chain is Acetyl-coenzyme A carboxylase carboxyl transferase subunit alpha (315 aa).

A CoA carboxyltransferase C-terminal domain is found at 40–293; that stretch reads LEDKKIALTK…KKNVLAALDR (254 aa).

Belongs to the AccA family. As to quaternary structure, acetyl-CoA carboxylase is a heterohexamer composed of biotin carboxyl carrier protein (AccB), biotin carboxylase (AccC) and two subunits each of ACCase subunit alpha (AccA) and ACCase subunit beta (AccD).

It localises to the cytoplasm. It carries out the reaction N(6)-carboxybiotinyl-L-lysyl-[protein] + acetyl-CoA = N(6)-biotinyl-L-lysyl-[protein] + malonyl-CoA. The protein operates within lipid metabolism; malonyl-CoA biosynthesis; malonyl-CoA from acetyl-CoA: step 1/1. Component of the acetyl coenzyme A carboxylase (ACC) complex. First, biotin carboxylase catalyzes the carboxylation of biotin on its carrier protein (BCCP) and then the CO(2) group is transferred by the carboxyltransferase to acetyl-CoA to form malonyl-CoA. This Marinomonas sp. (strain MWYL1) protein is Acetyl-coenzyme A carboxylase carboxyl transferase subunit alpha.